We begin with the raw amino-acid sequence, 577 residues long: MADYNSLYQHGLYLSPDQQDLLLAALSSNNPPSKQKQNVQKPELGTNPTNTPGQASTGSFNTSPAFDGSHQFDNLNYDESPFLDFNPELEWDFPGSENLIGELPGSATSDDHEVGEKRKDSNSNGEVNGKKRRESDDKSDDKTSKKPGRKPLTSEPTSKRKAQNRAAQRAFRERKEKHLKDLEAKVEELQKASDSANQENGLLKAQVERLQVELREYRKRLSWVTQGNALSAINSYPGNANRMSGLNNNDFMFDFPKFGDLPGGRIFNGSVAKTNQNKKDDTPIPGILRHSALQAANGRASSSASPKTVTSNNPATKSPVTADGRLTSHTSSVYNYHQPGQGHDTSTSDSPSSSSDSHQFLSSSGTSPEPSVQSPDNQAKESHEGHTCTIDGEKSFCAQLGMACGNINNPIPAVRQRSESATNTPNAPSSTDNVPGIDFMAQQNGGQFDPLLFGDWREPQDAVLSQDFNTFFDDAFPLPDLGSPSHNLTEVGLGAQQKKSILEEMDNKEEEEVVPGEDKAQMLSCTKIWDRLQSMEKFRNGEIDVDNLCSELRTKARCSEGGVVVNQRDVDDIIGRV.

Residues 25–178 (ALSSNNPPSK…RAFRERKEKH (154 aa)) form a disordered region. A compositionally biased stretch (polar residues) spans 26 to 64 (LSSNNPPSKQKQNVQKPELGTNPTNTPGQASTGSFNTSP). Composition is skewed to basic and acidic residues over residues 109–121 (SDDH…RKDS) and 133–144 (RESDDKSDDKTS). 2 short sequence motifs (bipartite nuclear localization signal) span residues 117–124 (KRKDSNSN) and 144–151 (SKKPGRKP). One can recognise a bZIP domain in the interval 154 to 217 (SEPTSKRKAQ…ERLQVELREY (64 aa)). The segment at 159-180 (KRKAQNRAAQRAFRERKEKHLK) is basic motif. Positions 182–189 (LEAKVEEL) are leucine-zipper. Residues 294–386 (QAANGRASSS…NQAKESHEGH (93 aa)) form a disordered region. Residues 299–319 (RASSSASPKTVTSNNPATKSP) show a composition bias toward polar residues. A compositionally biased stretch (low complexity) spans 347–364 (TSDSPSSSSDSHQFLSSS). Residues 365-377 (GTSPEPSVQSPDN) show a composition bias toward polar residues. The interval 525 to 558 (CTKIWDRLQSMEKFRNGEIDVDNLCSELRTKARC) is c-CRD. A Nuclear export signal motif is present at residues 543–550 (IDVDNLCS).

Belongs to the bZIP family. YAP subfamily. Post-translationally, oxidative stress induces conformational changes through oxidation of cysteine residues, masking the nuclear export signal, thus abolishing nuclear export by CRM1/exportin 1.

Its subcellular location is the nucleus. It localises to the cytoplasm. Its function is as follows. Transcription activator involved in oxidative stress response, specifically during hyphal growth. Regulates the transcription of genes encoding antioxidant enzymes and components of the cellular thiol-reducing pathways including the mycelium-specific catalase catB (but not the conidia-specific catalase catA), thioredoxin reductase trxB and thioredoxin thiO. Preferentially binds to promoters with the core binding site 5'-TTA[CG]TAA-3'. Activity of the transcription factor is controlled through oxidation of specific cysteine residues resulting in the alteration of its subcellular location. Activation by hydroperoxides induces nuclear accumulation and as a result NapA transcriptional activity. The protein is AP-1-like transcription factor napA of Emericella nidulans (strain FGSC A4 / ATCC 38163 / CBS 112.46 / NRRL 194 / M139) (Aspergillus nidulans).